Here is a 605-residue protein sequence, read N- to C-terminus: Capsid scaffolding protein (605 aa).

Catalysis depends on charge relay system residues H48, S116, and H139. Positions 235–274 (ASDAPDLQKPDKALQSPPPASTDPATMLSGNAGEGATACG) are disordered. An interaction with pAP region spans residues 281-300 (QDLISVPRNTFMTLLQTNLD). 2 disordered regions span residues 403 to 431 (DYVP…FPGE) and 489 to 588 (PHQS…KSVS). Positions 410–416 (RSNKRKR) match the Nuclear localization signal motif. A compositionally biased stretch (polar residues) spans 568–579 (ASASGVAQSKEP). The interaction with major capsid protein stretch occupies residues 585-605 (KSVSAHLKSIFCEELLNKRVA).

This sequence belongs to the herpesviridae capsid scaffolding protein family. As to quaternary structure, homomultimer. Interacts with major capsid protein. Exists in a monomer-dimer equilibrium with the dimer being the active species. In terms of processing, capsid scaffolding protein is cleaved by assemblin after formation of the spherical procapsid. As a result, the capsid obtains its mature, icosahedral shape. Cleavages occur at two or more sites: release (R-site) and maturation (M-site).

Its subcellular location is the host cytoplasm. The protein localises to the host nucleus. It catalyses the reaction Cleaves -Ala-|-Ser- and -Ala-|-Ala- bonds in the scaffold protein.. Its function is as follows. Acts as a scaffold protein by binding major capsid protein in the cytoplasm, inducing the nuclear localization of both proteins. Multimerizes in the nucleus such as major capsid protein forms the icosahedral T=16 capsid. Autocatalytic cleavage releases the assembly protein, and subsequently abolishes interaction with major capsid protein. Cleavages products are evicted from the capsid before or during DNA packaging. Functionally, protease that plays an essential role in virion assembly within the nucleus. Catalyzes the cleavage of the assembly protein after formation of the spherical procapsid. By that cleavage, the capsid matures and gains its icosahedral shape. The cleavage sites seem to include -Ala-Ser-, -Ala-Ala-, as well as Ala-Thr bonds. Assemblin and cleavages products are evicted from the capsid before or during DNA packaging. Plays a major role in capsid assembly. Acts as a scaffold protein by binding major capsid protein. Multimerizes in the nucleus such as major capsid protein forms the icosahedral T=16 capsid. Cleaved by assemblin after capsid completion. The cleavages products are evicted from the capsid before or during DNA packaging. The protein is Capsid scaffolding protein of Homo sapiens (Human).